The chain runs to 88 residues: Elongation factor 1-beta (88 aa).

Belongs to the EF-1-beta/EF-1-delta family.

In terms of biological role, promotes the exchange of GDP for GTP in EF-1-alpha/GDP, thus allowing the regeneration of EF-1-alpha/GTP that could then be used to form the ternary complex EF-1-alpha/GTP/AAtRNA. The chain is Elongation factor 1-beta (ef1b) from Archaeoglobus fulgidus (strain ATCC 49558 / DSM 4304 / JCM 9628 / NBRC 100126 / VC-16).